The chain runs to 902 residues: HTH-type transcriptional regulator MalT (902 aa).

Residue 39–46 (SPAGYGKT) coordinates ATP. Positions 832-897 (ELVRTSPLTQ…EAIVTAENLL (66 aa)) constitute an HTH luxR-type domain. Positions 856 to 875 (NEQIAQELDVAGTTIKTHIR) form a DNA-binding region, H-T-H motif.

The protein belongs to the MalT family. As to quaternary structure, monomer in solution. Oligomerizes to an active state in the presence of the positive effectors ATP and maltotriose.

Activated by ATP and maltotriose, which are both required for DNA binding. In terms of biological role, positively regulates the transcription of the maltose regulon whose gene products are responsible for uptake and catabolism of malto-oligosaccharides. Specifically binds to the promoter region of its target genes, recognizing a short DNA motif called the MalT box. This Vibrio campbellii (strain ATCC BAA-1116) protein is HTH-type transcriptional regulator MalT.